A 281-amino-acid polypeptide reads, in one-letter code: Nuclear transcription factor Y subunit nfya-2 (281 aa).

Disordered regions lie at residues 1–27 (MNPRGNPSKMPTQIVLNRRPAAPARPQ) and 163–261 (REMR…VQEE). The Subunit association domain (SAD) signature appears at 150-173 (MVNPRQYKRIIKRREMRQKMEDSG). Over residues 166 to 188 (RQKMEDSGRLPLERQKYMHESRR) the composition is skewed to basic and acidic residues. Residues 180 to 204 (QKYMHESRRQHALKRRRTGGRFDAN) constitute a DNA-binding region (NFYA/HAP2-type). Residues 189-198 (QHALKRRRTG) show a composition bias toward basic residues. Residues 204 to 220 (NAEAAAASSEPSISSAA) show a composition bias toward low complexity.

Belongs to the NFYA/HAP2 subunit family. Forms a heterotrimeric transcription factor complex (nfya-2-NF-Y complex) composed of nfya-2, nfyb-1 and nfyc-1. Interacts with the nfyb-1 and nfyc-1 dimer; the interaction is required for subsequent binding to the 5'-CCAAT-3' box motif in DNA. Does not interact with either nfyb-1 or nfyc-1 in their monomeric form. Highly expressed in certain parts of the gonads. Expressed in the spermatheca, intestine and in some neurons in the head. Not expressed in the intestine, the hypodermis, body wall muscle surrounding the pseudocoelomic space, secretory cells in the pharyngeal terminal bulb wall, in the small ganglia surrounding the pharynx and in the neurons running anteriorly to the sensory organs in the head.

Its subcellular location is the nucleus. Functionally, component of the sequence-specific heterotrimeric transcription factor (nfya-2-NF-Y) which specifically recognizes a 5'-CCAAT-3' box motif found in the promoters of its target genes to regulate their expression and control cellular identity in particular tissue types. In association with the components in the nfya-2-NF-Y complex, may repress the expression of the T-box transcription factor tbx-2 throughout larval development, which most likely restricts its expression to certain tissues. The protein is Nuclear transcription factor Y subunit nfya-2 of Caenorhabditis elegans.